A 427-amino-acid chain; its full sequence is Aspartate aminotransferase, mitochondrial (427 aa).

A mitochondrion-targeting transit peptide spans 1–26; sequence MALLKSRLLVGVARCQPCLAAVQGRA. Residues G62, W159, and N212 each coordinate substrate. K276 bears the N6-(pyridoxal phosphate)lysine mark. Substrate is bound at residue R404.

Belongs to the class-I pyridoxal-phosphate-dependent aminotransferase family. Homodimer. It depends on pyridoxal 5'-phosphate as a cofactor.

It is found in the mitochondrion matrix. The catalysed reaction is L-aspartate + 2-oxoglutarate = oxaloacetate + L-glutamate. It catalyses the reaction L-kynurenine + 2-oxoglutarate = kynurenate + L-glutamate + H2O. Functionally, catalyzes the irreversible transamination of the L-tryptophan metabolite L-kynurenine to form kynurenic acid (KA). As a member of the malate-aspartate shuttle, it has a key role in the intracellular NAD(H) redox balance. Is important for metabolite exchange between mitochondria and cytosol, and for amino acid metabolism. This chain is Aspartate aminotransferase, mitochondrial (got2), found in Xenopus tropicalis (Western clawed frog).